A 1534-amino-acid chain; its full sequence is ABC transporter G family member 6 (1534 aa).

Residues M1–S11 show a composition bias toward basic and acidic residues. A disordered region spans residues M1–K85. A compositionally biased stretch (low complexity) spans N21–L65. One can recognise an ABC transporter 1 domain in the interval V138–S385. G177–S184 provides a ligand contact to ATP. In terms of domain architecture, ABC transmembrane type-2 1 spans R481–F757. A run of 7 helical transmembrane segments spans residues N486–W506, L521–F541, I566–W586, P592–L612, I625–F645, I652–L672, and V734–L754. Residues K781 to S907 are disordered. Over residues I797–E808 the composition is skewed to acidic residues. A compositionally biased stretch (polar residues) spans S830–Y841. Low complexity predominate over residues N842–N856. The segment covering T864–N873 has biased composition (polar residues). The span at S874–N896 shows a compositional bias: low complexity. Residues E897 to G906 are compositionally biased toward basic and acidic residues. In terms of domain architecture, ABC transporter 2 spans V924–G1166. G960–S967 contacts ATP. The region spanning L1256–I1529 is the ABC transmembrane type-2 2 domain. The next 6 membrane-spanning stretches (helical) occupy residues I1261–V1281, L1296–V1316, Y1345–L1365, C1377–V1397, M1404–I1424, and I1506–F1526.

The protein belongs to the ABC transporter superfamily. ABCG family. PDR (TC 3.A.1.205) subfamily.

The protein resides in the membrane. This is ABC transporter G family member 6 (abcG6) from Dictyostelium discoideum (Social amoeba).